A 173-amino-acid polypeptide reads, in one-letter code: dCTP deaminase, dUMP-forming (173 aa).

Residues 93-98, aspartate 111, 119-121, glutamine 138, and tyrosine 151 contribute to the dCTP site; these read RSSTGR and TLE. The active-site Proton donor/acceptor is glutamate 121.

This sequence belongs to the dCTP deaminase family. Homotrimer.

It catalyses the reaction dCTP + 2 H2O = dUMP + NH4(+) + diphosphate. It functions in the pathway pyrimidine metabolism; dUMP biosynthesis; dUMP from dCTP: step 1/1. In terms of biological role, bifunctional enzyme that catalyzes both the deamination of dCTP to dUTP and the hydrolysis of dUTP to dUMP without releasing the toxic dUTP intermediate. In Clostridium beijerinckii (strain ATCC 51743 / NCIMB 8052) (Clostridium acetobutylicum), this protein is dCTP deaminase, dUMP-forming.